Consider the following 467-residue polypeptide: Xanthan biosynthesis protein XanB (467 aa).

The protein belongs to the mannose-6-phosphate isomerase type 2 family.

The catalysed reaction is D-mannose 6-phosphate = D-fructose 6-phosphate. The enzyme catalyses alpha-D-mannose 1-phosphate + GTP + H(+) = GDP-alpha-D-mannose + diphosphate. Its pathway is nucleotide-sugar biosynthesis; GDP-alpha-D-mannose biosynthesis; GDP-alpha-D-mannose from alpha-D-mannose 1-phosphate (GTP route): step 1/1. It participates in nucleotide-sugar biosynthesis; GDP-alpha-D-mannose biosynthesis; alpha-D-mannose 1-phosphate from D-fructose 6-phosphate: step 1/2. In terms of biological role, involved in xanthan production. This chain is Xanthan biosynthesis protein XanB (xanB), found in Xanthomonas campestris pv. campestris (strain ATCC 33913 / DSM 3586 / NCPPB 528 / LMG 568 / P 25).